The primary structure comprises 490 residues: Bifunctional protein HldE (490 aa).

The segment at 1–330 is ribokinase; the sequence is MFSFDALLQA…RRILPHASLA (330 aa). 205 to 208 is an ATP binding site; that stretch reads NRKE. The active site involves Asp275. The interval 358–490 is cytidylyltransferase; sequence FTNGCFDILH…LVARAREGQS (133 aa).

In the N-terminal section; belongs to the carbohydrate kinase PfkB family. It in the C-terminal section; belongs to the cytidylyltransferase family. Homodimer.

The catalysed reaction is D-glycero-beta-D-manno-heptose 7-phosphate + ATP = D-glycero-beta-D-manno-heptose 1,7-bisphosphate + ADP + H(+). It carries out the reaction D-glycero-beta-D-manno-heptose 1-phosphate + ATP + H(+) = ADP-D-glycero-beta-D-manno-heptose + diphosphate. The protein operates within nucleotide-sugar biosynthesis; ADP-L-glycero-beta-D-manno-heptose biosynthesis; ADP-L-glycero-beta-D-manno-heptose from D-glycero-beta-D-manno-heptose 7-phosphate: step 1/4. It participates in nucleotide-sugar biosynthesis; ADP-L-glycero-beta-D-manno-heptose biosynthesis; ADP-L-glycero-beta-D-manno-heptose from D-glycero-beta-D-manno-heptose 7-phosphate: step 3/4. Catalyzes the phosphorylation of D-glycero-D-manno-heptose 7-phosphate at the C-1 position to selectively form D-glycero-beta-D-manno-heptose-1,7-bisphosphate. Functionally, catalyzes the ADP transfer from ATP to D-glycero-beta-D-manno-heptose 1-phosphate, yielding ADP-D-glycero-beta-D-manno-heptose. The sequence is that of Bifunctional protein HldE from Rhodopseudomonas palustris (strain ATCC BAA-98 / CGA009).